The chain runs to 154 residues: Transcriptional repressor NrdR (154 aa).

The segment at 3–34 (CPFCGNENTRVIDTRAAEDGFAIKRRRECENC) is a zinc-finger region. One can recognise an ATP-cone domain in the interval 49 to 139 (LIVVKKDGSK…VYRQFKDVNS (91 aa)).

Belongs to the NrdR family. Zn(2+) serves as cofactor.

Negatively regulates transcription of bacterial ribonucleotide reductase nrd genes and operons by binding to NrdR-boxes. This chain is Transcriptional repressor NrdR, found in Carboxydothermus hydrogenoformans (strain ATCC BAA-161 / DSM 6008 / Z-2901).